A 504-amino-acid chain; its full sequence is Maturase K (504 aa).

Belongs to the intron maturase 2 family. MatK subfamily.

It is found in the plastid. The protein resides in the chloroplast. Its function is as follows. Usually encoded in the trnK tRNA gene intron. Probably assists in splicing its own and other chloroplast group II introns. The protein is Maturase K of Adansonia digitata (Baobab tree).